The chain runs to 229 residues: Protein-L-isoaspartate O-methyltransferase (229 aa).

Ser65 is a catalytic residue.

This sequence belongs to the methyltransferase superfamily. L-isoaspartyl/D-aspartyl protein methyltransferase family.

The protein localises to the cytoplasm. It carries out the reaction [protein]-L-isoaspartate + S-adenosyl-L-methionine = [protein]-L-isoaspartate alpha-methyl ester + S-adenosyl-L-homocysteine. Its function is as follows. Catalyzes the methyl esterification of L-isoaspartyl residues in peptides and proteins that result from spontaneous decomposition of normal L-aspartyl and L-asparaginyl residues. It plays a role in the repair and/or degradation of damaged proteins. The protein is Protein-L-isoaspartate O-methyltransferase of Chlorobium phaeovibrioides (strain DSM 265 / 1930) (Prosthecochloris vibrioformis (strain DSM 265)).